The chain runs to 356 residues: Alanine racemase, catabolic (356 aa).

Lys-35 acts as the Proton acceptor; specific for D-alanine in catalysis. N6-(pyridoxal phosphate)lysine is present on Lys-35. Arg-130 contributes to the substrate binding site. Tyr-253 functions as the Proton acceptor; specific for L-alanine in the catalytic mechanism. Residue Met-301 participates in substrate binding.

The protein belongs to the alanine racemase family. Monomer. Pyridoxal 5'-phosphate serves as cofactor.

It catalyses the reaction L-alanine = D-alanine. Inactivated by D- and L-beta-fluoroalanine, D- and L-beta-chloroalanine, and O-acetyl-D-serine. In terms of biological role, isomerizes L-alanine to D-alanine which is then oxidized to pyruvate by DadA. The protein is Alanine racemase, catabolic (dadX) of Salmonella typhimurium (strain LT2 / SGSC1412 / ATCC 700720).